The primary structure comprises 157 residues: 2-C-methyl-D-erythritol 2,4-cyclodiphosphate synthase (157 aa).

A divalent metal cation contacts are provided by Asp9 and His11. 4-CDP-2-C-methyl-D-erythritol 2-phosphate-binding positions include 9-11 and 35-36; these read DVH and HS. An a divalent metal cation-binding site is contributed by His43. 4-CDP-2-C-methyl-D-erythritol 2-phosphate-binding positions include 57–59, 62–66, 101–107, 133–136, Phe140, and Arg143; these read DIG, FPDTD, AQKPKMA, and TTTE.

It belongs to the IspF family. As to quaternary structure, homotrimer. Requires a divalent metal cation as cofactor.

The catalysed reaction is 4-CDP-2-C-methyl-D-erythritol 2-phosphate = 2-C-methyl-D-erythritol 2,4-cyclic diphosphate + CMP. Its pathway is isoprenoid biosynthesis; isopentenyl diphosphate biosynthesis via DXP pathway; isopentenyl diphosphate from 1-deoxy-D-xylulose 5-phosphate: step 4/6. Involved in the biosynthesis of isopentenyl diphosphate (IPP) and dimethylallyl diphosphate (DMAPP), two major building blocks of isoprenoid compounds. Catalyzes the conversion of 4-diphosphocytidyl-2-C-methyl-D-erythritol 2-phosphate (CDP-ME2P) to 2-C-methyl-D-erythritol 2,4-cyclodiphosphate (ME-CPP) with a corresponding release of cytidine 5-monophosphate (CMP). The sequence is that of 2-C-methyl-D-erythritol 2,4-cyclodiphosphate synthase from Halalkalibacterium halodurans (strain ATCC BAA-125 / DSM 18197 / FERM 7344 / JCM 9153 / C-125) (Bacillus halodurans).